Consider the following 114-residue polypeptide: MLEQEQASYRVERINELIRRELTLLLRTSIKDPRLRDMIITDVLISRDLSSAKVFYTVIKEDKKMIEPLLDKASGFFRIHLSKTIDLRHTPVLRFIFDSAPNTGARIEQLLSKL.

Belongs to the RbfA family. As to quaternary structure, monomer. Binds 30S ribosomal subunits, but not 50S ribosomal subunits or 70S ribosomes.

Its subcellular location is the cytoplasm. Functionally, one of several proteins that assist in the late maturation steps of the functional core of the 30S ribosomal subunit. Associates with free 30S ribosomal subunits (but not with 30S subunits that are part of 70S ribosomes or polysomes). Required for efficient processing of 16S rRNA. May interact with the 5'-terminal helix region of 16S rRNA. This Vesicomyosocius okutanii subsp. Calyptogena okutanii (strain HA) protein is Ribosome-binding factor A.